The chain runs to 389 residues: Alpha-2B adrenergic receptor (389 aa).

The chain crosses the membrane as a helical span at residues 1-25 (AIAAVITFLILFTIFGNALVILAVL). The Cytoplasmic portion of the chain corresponds to 26–36 (TSRSLRAPQNL). The chain crosses the membrane as a helical span at residues 37–62 (FLVSLAAADILVATLIIPFSLANELL). Topologically, residues 63-72 (GYWYFRRTWC) are extracellular. Cys-72 and Cys-151 are oxidised to a cystine. The helical transmembrane segment at 73–95 (EVYLALDVLFCTSSIVHLCAISL) threads the bilayer. Residues 96 to 117 (DRYWAVTRALEYNTKRTPRRIK) lie on the Cytoplasmic side of the membrane. The chain crosses the membrane as a helical span at residues 118–140 (CIILTVWLIAAVISLPPLIYKGD). Residues 141 to 156 (QGPQPRGRPQCKLNQE) are Extracellular-facing. A helical transmembrane segment spans residues 157 to 180 (AWYILASSIGSFFAPCLIMILVYL). Topologically, residues 181 to 363 (RIYLIAKRSH…LTREKRFTFV (183 aa)) are cytoplasmic. Disordered stretches follow at residues 194–216 (PRAK…AGAS) and 233–320 (EANG…PLQQ). Over residues 196–205 (AKGGPGGGGS) the composition is skewed to gly residues. The span at 255-267 (PALPSSWPALPSS) shows a compositional bias: low complexity. Residues 280–302 (LEEEAEEEEEEEEEEEEGEEECE) show a composition bias toward acidic residues. Residues 303–320 (PQALPASPASACSPPLQQ) are compositionally biased toward low complexity. Residues 364 to 387 (LAVVIGVFVLCWFPFFFSYSLGAI) form a helical membrane-spanning segment. The Extracellular segment spans residues 388–389 (CP).

It belongs to the G-protein coupled receptor 1 family. Adrenergic receptor subfamily. ADRA2B sub-subfamily. As to quaternary structure, interacts with RAB26. Interacts with PPP1R9B. Interacts with GGA1, GGA2 and GGA3.

Its subcellular location is the cell membrane. Alpha-2 adrenergic receptors mediate the catecholamine-induced inhibition of adenylate cyclase through the action of G proteins. The sequence is that of Alpha-2B adrenergic receptor (ADRA2B) from Equus caballus (Horse).